The following is a 433-amino-acid chain: Phosphomethylpyrimidine synthase (433 aa).

Residues asparagine 68, methionine 97, tyrosine 126, histidine 162, 184 to 186 (SRG), 225 to 228 (DALR), and glutamate 264 each bind substrate. Zn(2+) is bound at residue histidine 268. Tyrosine 291 lines the substrate pocket. Residue histidine 332 coordinates Zn(2+). 3 residues coordinate [4Fe-4S] cluster: cysteine 408, cysteine 411, and cysteine 415.

This sequence belongs to the ThiC family. It depends on [4Fe-4S] cluster as a cofactor.

It catalyses the reaction 5-amino-1-(5-phospho-beta-D-ribosyl)imidazole + S-adenosyl-L-methionine = 4-amino-2-methyl-5-(phosphooxymethyl)pyrimidine + CO + 5'-deoxyadenosine + formate + L-methionine + 3 H(+). It functions in the pathway cofactor biosynthesis; thiamine diphosphate biosynthesis. Functionally, catalyzes the synthesis of the hydroxymethylpyrimidine phosphate (HMP-P) moiety of thiamine from aminoimidazole ribotide (AIR) in a radical S-adenosyl-L-methionine (SAM)-dependent reaction. The chain is Phosphomethylpyrimidine synthase from Fusobacterium nucleatum subsp. nucleatum (strain ATCC 25586 / DSM 15643 / BCRC 10681 / CIP 101130 / JCM 8532 / KCTC 2640 / LMG 13131 / VPI 4355).